A 515-amino-acid polypeptide reads, in one-letter code: Putative BTB/POZ domain-containing protein At3g49970 (515 aa).

Residues 1–63 (MLEKLSFLLH…CYDISFEINT (63 aa)) form the BTB domain. Positions 149–409 (DWWADDLAVL…NSDSPAPATA (261 aa)) constitute an NPH3 domain. Tyrosine 350 bears the Phosphotyrosine mark. Residues 395–417 (QENLSNSDSPAPATAEKTLSPPE) form a disordered region. Positions 418–452 (LSSYKNELSKLNRENQYLKLELLKVKMKFKELEKE) form a coiled coil. Positions 494 to 515 (INPFGLKQGQTKQPKSRRHSIS) are disordered.

Belongs to the NPH3 family.

It participates in protein modification; protein ubiquitination. Functionally, may act as a substrate-specific adapter of an E3 ubiquitin-protein ligase complex (CUL3-RBX1-BTB) which mediates the ubiquitination and subsequent proteasomal degradation of target proteins. In Arabidopsis thaliana (Mouse-ear cress), this protein is Putative BTB/POZ domain-containing protein At3g49970.